The chain runs to 1714 residues: Intersectin-1 (1714 aa).

The region spanning 21–109 (ERAKHDQQFL…PVMKQQPVAI (89 aa)) is the EH 1 domain. The EF-hand 1 domain maps to 53-88 (LPQPVLAQIWALADMNNDGRMDQVEFSIAMKLIKLK). The Ca(2+) site is built by Asp-66, Asn-68, Asp-70, Arg-72, and Glu-77. At Ser-203 the chain carries Phosphoserine. The 90-residue stretch at 221 to 310 (SRLKYRQLFN…PEYIPPSFRR (90 aa)) folds into the EH 2 domain. The EF-hand 2 domain occupies 254 to 289 (LPQAQLASIWNLSDIDQDGKLTAEEFILAMHLIDVA). Ca(2+)-binding residues include Asp-267, Asp-269, Asp-271, Lys-273, and Glu-278. Over residues 310 to 325 (RVRSGSGMSVISSSSV) the composition is skewed to low complexity. 2 disordered regions span residues 310 to 356 (RVRS…KREN) and 614 to 706 (SKQQ…QSRL). A phosphoserine mark is found at Ser-318, Ser-334, and Ser-335. The segment at 326–702 (DQRLPEEPSS…ERAKPEMQDK (377 aa)) is KLERQ. 2 stretches are compositionally biased toward basic and acidic residues: residues 340-356 (QPEKKLPVTFEDKKREN) and 622-706 (RSLE…QSRL). A coiled-coil region spans residues 354 to 658 (RENFERGSVE…QRRVQERDKQ (305 aa)). The residue at position 685 (Ser-685) is a Phosphoserine. The region spanning 738–799 (VKVVYYRALY…PANYAEKIPE (62 aa)) is the SH3 1 domain. The segment at 827 to 863 (APLPVTSSEPSTTPNNWADFSSTWPSSSNEKPETDNW) is disordered. Residues 831–855 (VTSSEPSTTPNNWADFSSTWPSSSN) are compositionally biased toward polar residues. Thr-890 is subject to Phosphothreonine. Residues Ser-894, Ser-895, and Ser-897 each carry the phosphoserine modification. The region spanning 906–964 (VEGLQAQALYPWRAKKDNHLNFNKSDVITVLEQQDMWWFGEVQGQKGWFPKSYVKLISG) is the SH3 2 domain. Ser-971 carries the phosphoserine modification. Thr-977 is subject to Phosphothreonine. A phosphoserine mark is found at Ser-979 and Ser-988. SH3 domains follow at residues 995 to 1053 (IPGE…LKDS) and 1067 to 1131 (KKPE…LLSP). Positions 1067–1131 (KKPEIAQVIA…PANYVKLLSP (65 aa)) are required for interaction with FCHSD2. The short motif at 1097–1120 (RKKNPGGWWEGELQARGKKRQIGW) is the Bipartite nuclear localization signal; in isoform 2 element. Phosphoserine is present on Ser-1130. Thr-1137 bears the Phosphothreonine mark. One can recognise an SH3 5 domain in the interval 1148–1207 (PAVCQVIGMYDYTAQNDDELAFSKGQIINVLNKEDPDWWKGEVSGQVGLFPSNYVKLTTD). The region spanning 1230 to 1416 (KRQGYIHELI…EELCSQVNEG (187 aa)) is the DH domain. The PH domain maps to 1455-1564 (KFLHSGKLYK…WVQKIKAASE (110 aa)). A C2 domain is found at 1572-1688 (KKREKAYLVR…KKDQGSKGPV (117 aa)). Phosphoserine is present on Ser-1638. The Ca(2+) site is built by Asp-1660, Ser-1663, and Asp-1666.

As to quaternary structure, interacts (via DH domain) with CDC42. Interacts (via SH3 domain 1) with WASL. Interacts with dynamin, SNAP25 and SNAP23. Interacts with clathrin-associated proteins and other components of the endocytic machinery, such as SPIN90, EPS15, EPN1, EPN2, STON2, FCHO1, FCHO2 and DAB2. Interacts (via SH3 domains) with REPS1 and SGIP1. Interacts with ARHGAP31. Interacts with ADAM15. Interacts with PRRT2. Interacts (via SH3 domain 4) with FCHSD2 (via SH3 domain 2). Interacts (via SH3 domain 1) with DENND2B. Interacts (via SH3 domains) with CBL. Isoform 2: Interacts with CBL and DNM1. Isoform 2: Interacts with LMNA. Isoform 2: Interacts with importin subunit KPNA1; this is likely to mediate its import into the nucleus. Interacts with DNM2. Ca(2+) is required as a cofactor. As to expression, detected in brain, adrenal gland and heart. Detected in neurons at the calyx of Held (at protein level). Isoform 1: Primarily detected in brain neurons. Isoform 2: Primarily detected in glia (at protein level). Widely expressed. Expressed at high levels in brain, heart and skeletal muscle.

Its subcellular location is the endomembrane system. The protein resides in the synapse. It localises to the synaptosome. It is found in the cell projection. The protein localises to the lamellipodium. Its subcellular location is the cell membrane. The protein resides in the membrane. It localises to the clathrin-coated pit. It is found in the recycling endosome. The protein localises to the endosome. Its subcellular location is the cytoplasmic vesicle. The protein resides in the cytoplasm. It localises to the nucleus envelope. Functionally, adapter protein that provides a link between the endocytic membrane traffic and the actin assembly machinery. Acts as a guanine nucleotide exchange factor (GEF) for CDC42, and thereby stimulates actin nucleation mediated by WASL and the ARP2/3 complex. Plays a role in the assembly and maturation of clathrin-coated vesicles. Recruits FCHSD2 to clathrin-coated pits. Involved in endocytosis of activated EGFR, and probably also other growth factor receptors. Involved in endocytosis of integrin beta-1 (ITGB1) and transferrin receptor (TFR); internalization of ITGB1 as DAB2-dependent cargo but not TFR may involve association with DAB2. Promotes ubiquitination and subsequent degradation of EGFR, and thereby contributes to the down-regulation of EGFR-dependent signaling pathways. In chromaffin cells, required for normal exocytosis of catecholamines. Required for rapid replenishment of release-ready synaptic vesicles at presynaptic active zones. Inhibits ARHGAP31 activity toward RAC1. Its function is as follows. Plays a role in synaptic vesicle endocytosis in brain neurons. This is Intersectin-1 from Mus musculus (Mouse).